The sequence spans 169 residues: MASIAVCPGSFDPVTYGHLDIIRRGAKVFDQVYVAVLNNSSKKPLFSVEERIELLREVTRPFPNVIVESFHGLLVDYARSKNASAILRGLRAVSDFEYEMQITSMNRVLDENIETFFMMTNSQYAFLSSSIVKEVAKYNGNISDLVPPVVEEALRKKFASLTSNERNES.

Residue serine 10 participates in substrate binding. ATP-binding positions include 10 to 11 and histidine 18; that span reads SF. Residues lysine 42, leucine 74, and arginine 88 each coordinate substrate. ATP-binding positions include 89-91, glutamate 99, and 124-130; these read GLR and YAFLSSS.

The protein belongs to the bacterial CoaD family. Homohexamer. Mg(2+) is required as a cofactor.

It localises to the cytoplasm. It catalyses the reaction (R)-4'-phosphopantetheine + ATP + H(+) = 3'-dephospho-CoA + diphosphate. Its pathway is cofactor biosynthesis; coenzyme A biosynthesis; CoA from (R)-pantothenate: step 4/5. Functionally, reversibly transfers an adenylyl group from ATP to 4'-phosphopantetheine, yielding dephospho-CoA (dPCoA) and pyrophosphate. This is Phosphopantetheine adenylyltransferase from Geobacillus sp. (strain WCH70).